Consider the following 644-residue polypeptide: Exoribonuclease 2 (644 aa).

The RNB domain maps to 189-516; the sequence is RQDLTALNFV…NHRLLKAVIK (328 aa). Positions 561–643 constitute an S1 motif domain; the sequence is NTRFAAEIID…ETRSIIARPA (83 aa).

This sequence belongs to the RNR ribonuclease family. RNase II subfamily.

It is found in the cytoplasm. It carries out the reaction Exonucleolytic cleavage in the 3'- to 5'-direction to yield nucleoside 5'-phosphates.. Functionally, involved in mRNA degradation. Hydrolyzes single-stranded polyribonucleotides processively in the 3' to 5' direction. This is Exoribonuclease 2 from Salmonella paratyphi B (strain ATCC BAA-1250 / SPB7).